A 211-amino-acid chain; its full sequence is Ribonuclease T (211 aa).

The Exonuclease domain occupies 24–198 (VVVDVETGGF…YDAEKTAHLF (175 aa)). Mg(2+) contacts are provided by aspartate 27, glutamate 29, histidine 185, and aspartate 190. Histidine 185 functions as the Proton donor/acceptor in the catalytic mechanism.

It belongs to the RNase T family. In terms of assembly, homodimer. Requires Mg(2+) as cofactor.

Functionally, trims short 3' overhangs of a variety of RNA species, leaving a one or two nucleotide 3' overhang. Responsible for the end-turnover of tRNA: specifically removes the terminal AMP residue from uncharged tRNA (tRNA-C-C-A). Also appears to be involved in tRNA biosynthesis. The sequence is that of Ribonuclease T from Xylella fastidiosa (strain 9a5c).